A 431-amino-acid chain; its full sequence is tRNA(Ile)-lysidine synthase (431 aa).

Position 25–30 (Ser25–Ser30) interacts with ATP.

It belongs to the tRNA(Ile)-lysidine synthase family.

The protein resides in the cytoplasm. The enzyme catalyses cytidine(34) in tRNA(Ile2) + L-lysine + ATP = lysidine(34) in tRNA(Ile2) + AMP + diphosphate + H(+). Ligates lysine onto the cytidine present at position 34 of the AUA codon-specific tRNA(Ile) that contains the anticodon CAU, in an ATP-dependent manner. Cytidine is converted to lysidine, thus changing the amino acid specificity of the tRNA from methionine to isoleucine. The protein is tRNA(Ile)-lysidine synthase of Lactobacillus gasseri (strain ATCC 33323 / DSM 20243 / BCRC 14619 / CIP 102991 / JCM 1131 / KCTC 3163 / NCIMB 11718 / NCTC 13722 / AM63).